An 85-amino-acid chain; its full sequence is Large ribosomal subunit protein uL29 (85 aa).

It belongs to the universal ribosomal protein uL29 family.

The sequence is that of Large ribosomal subunit protein uL29 from Thermobifida fusca (strain YX).